The sequence spans 318 residues: MANTLEQLKSYTTIVADTGDIEAIKRYQPEDATTNPSLILKAAQIPEYSALIDNAIAWAKLQSADIEQQIDDASDKLAVNIGVEILKLVPGRISTEVDARLSFDKEKSIAKAHKLVRLYQEAGVDKSRILIKLASTWEGICAAKELEQEGINCNLTLLFSFAQARACAEAGVYLISPFVGRILDWYKKDTGKDYDAVNDPGVVSVTEIYNYYKQHGYNTVVMGASFRNIGEIIELAGCDRLTIGPSLLEELANSQVTIQPKLIPASTTVAAGEPLTEAQFRWDFNQDPMAVDKLAEGIRNFAIDQGKLEVMLKAKLAN.

The active-site Schiff-base intermediate with substrate is the K132.

This sequence belongs to the transaldolase family. Type 1 subfamily. In terms of assembly, homodimer.

The protein resides in the cytoplasm. It catalyses the reaction D-sedoheptulose 7-phosphate + D-glyceraldehyde 3-phosphate = D-erythrose 4-phosphate + beta-D-fructose 6-phosphate. It functions in the pathway carbohydrate degradation; pentose phosphate pathway; D-glyceraldehyde 3-phosphate and beta-D-fructose 6-phosphate from D-ribose 5-phosphate and D-xylulose 5-phosphate (non-oxidative stage): step 2/3. In terms of biological role, transaldolase is important for the balance of metabolites in the pentose-phosphate pathway. In Shewanella sp. (strain MR-4), this protein is Transaldolase.